A 1026-amino-acid chain; its full sequence is Multidrug resistance protein MdtC (1026 aa).

The next 11 helical transmembrane spans lie at 15–35 (ILIA…LPVA), 333–353 (EVEE…FLFL), 360–380 (LIPA…MYLC), 387–407 (LSLM…IVVL), 431–451 (VGFT…PLLL), 463–483 (FAVT…TLTP), 528–548 (LVGV…IAIP), 853–873 (LILI…LYES), 897–917 (LFNA…IGIV), 953–973 (PIMM…LSGG), and 984–1004 (ITIV…TPVV).

The protein belongs to the resistance-nodulation-cell division (RND) (TC 2.A.6) family. MdtC subfamily. In terms of assembly, part of a tripartite efflux system composed of MdtA, MdtB and MdtC. MdtC forms a heteromultimer with MdtB.

It is found in the cell inner membrane. The polypeptide is Multidrug resistance protein MdtC (Salmonella paratyphi C (strain RKS4594)).